Here is a 255-residue protein sequence, read N- to C-terminus: Acetylglutamate kinase (255 aa).

Residues Gly40–Gly41, Arg62, and Asn153 contribute to the substrate site.

The protein belongs to the acetylglutamate kinase family. ArgB subfamily.

The protein resides in the cytoplasm. The enzyme catalyses N-acetyl-L-glutamate + ATP = N-acetyl-L-glutamyl 5-phosphate + ADP. It functions in the pathway amino-acid biosynthesis; L-arginine biosynthesis; N(2)-acetyl-L-ornithine from L-glutamate: step 2/4. Catalyzes the ATP-dependent phosphorylation of N-acetyl-L-glutamate. The protein is Acetylglutamate kinase of Bacillus cereus (strain ZK / E33L).